Here is a 328-residue protein sequence, read N- to C-terminus: P2Y purinoceptor 6 (328 aa).

The Extracellular portion of the chain corresponds to 1–27; that stretch reads MEWDNGTGQALGLPPTTCVYRENFKQL. The N-linked (GlcNAc...) asparagine glycan is linked to asparagine 5. A helical membrane pass occupies residues 28–48; the sequence is LLPPVYSAVLAAGLPLNICVI. The Cytoplasmic portion of the chain corresponds to 49-62; sequence TQICTSRRALTRTA. A helical membrane pass occupies residues 63 to 83; that stretch reads VYTLNLALADLLYACSLPLLI. Residues 84–101 lie on the Extracellular side of the membrane; it reads YNYAQGDHWPFGDFACRL. A disulfide bridge links cysteine 99 with cysteine 177. The helical transmembrane segment at 102-122 threads the bilayer; sequence VRFLFYANLHGSILFLTCISF. The Cytoplasmic portion of the chain corresponds to 123 to 144; the sequence is QRYLGICHPLAPWHKRGGRRAA. The chain crosses the membrane as a helical span at residues 145 to 165; it reads WLVCVAVWLAVTTQCLPTAIF. Residues 166 to 194 are Extracellular-facing; sequence AATGIQRNRTVCYDLSPPALATHYMPYGM. The helical transmembrane segment at 195-215 threads the bilayer; that stretch reads ALTVIGFLLPFAALLACYCLL. Residues 216 to 236 lie on the Cytoplasmic side of the membrane; sequence ACRLCRQDGPAEPVAQERRGK. The chain crosses the membrane as a helical span at residues 237–257; it reads AARMAVVVAAAFAISFLPFHI. The Extracellular portion of the chain corresponds to 258-280; the sequence is TKTAYLAVRSTPGVPCTVLEAFA. A helical transmembrane segment spans residues 281–303; the sequence is AAYKGTRPFASANSVLDPILFYF. The Cytoplasmic segment spans residues 304–328; it reads TQKKFRRRPHELLQKLTAKWQRQGR.

Belongs to the G-protein coupled receptor 1 family.

Its subcellular location is the cell membrane. In terms of biological role, receptor for extracellular UDP &gt; UTP &gt; ATP. The activity of this receptor is mediated by G proteins which activate a phosphatidylinositol-calcium second messenger system. The polypeptide is P2Y purinoceptor 6 (P2RY6) (Homo sapiens (Human)).